A 61-amino-acid polypeptide reads, in one-letter code: Small ribosomal subunit protein uS14 (61 aa).

The Zn(2+) site is built by Cys-24, Cys-27, Cys-40, and Cys-43.

The protein belongs to the universal ribosomal protein uS14 family. Zinc-binding uS14 subfamily. Part of the 30S ribosomal subunit. Contacts proteins S3 and S10. The cofactor is Zn(2+).

Functionally, binds 16S rRNA, required for the assembly of 30S particles and may also be responsible for determining the conformation of the 16S rRNA at the A site. The sequence is that of Small ribosomal subunit protein uS14 from Anaeromyxobacter dehalogenans (strain 2CP-1 / ATCC BAA-258).